The following is a 949-amino-acid chain: AP-1 complex subunit beta-1 (949 aa).

Lysine 318 is subject to N6-acetyllysine. A 3'-nitrotyrosine modification is found at tyrosine 574. The disordered stretch occupies residues 584–625; that stretch reads GGRGVVHKSLPPRTASSESAESPETAPTGAPPGEQPDVIPAQ. A compositionally biased stretch (low complexity) spans 594 to 611; sequence PPRTASSESAESPETAPT.

The protein belongs to the adaptor complexes large subunit family. As to quaternary structure, adaptor protein complex 1 (AP-1) is a heterotetramer composed of two large adaptins (gamma-type subunit AP1G1 and beta-type subunit AP1B1), a medium adaptin (mu-type subunit AP1M1 or AP1M2) and a small adaptin (sigma-type subunit AP1S1 or AP1S2 or AP1S3). In terms of tissue distribution, widely expressed.

It is found in the golgi apparatus. It localises to the cytoplasmic vesicle. Its subcellular location is the clathrin-coated vesicle membrane. In terms of biological role, subunit of clathrin-associated adaptor protein complex 1 that plays a role in protein sorting in the late-Golgi/trans-Golgi network (TGN) and/or endosomes. The AP complexes mediate both the recruitment of clathrin to membranes and the recognition of sorting signals within the cytosolic tails of transmembrane cargo molecules. In Homo sapiens (Human), this protein is AP-1 complex subunit beta-1 (AP1B1).